Here is a 621-residue protein sequence, read N- to C-terminus: uncharacterized protein (621 aa).

A run of 3 helical transmembrane segments spans residues 240-260 (FFDA…NLLW), 548-568 (LGIV…VWTV), and 587-607 (VIIG…LTFM).

Its subcellular location is the cell membrane. This is an uncharacterized protein from Mycoplasma pneumoniae (strain ATCC 29342 / M129 / Subtype 1) (Mycoplasmoides pneumoniae).